Here is a 35-residue protein sequence, read N- to C-terminus: Photosystem II reaction center protein M (35 aa).

The helical transmembrane segment at 5-25 (IFGLTATALFIIIPTSFLLIL) threads the bilayer.

It belongs to the PsbM family. As to quaternary structure, PSII is composed of 1 copy each of membrane proteins PsbA, PsbB, PsbC, PsbD, PsbE, PsbF, PsbH, PsbI, PsbJ, PsbK, PsbL, PsbM, PsbT, PsbX, PsbY, PsbZ, Psb30/Ycf12, at least 3 peripheral proteins of the oxygen-evolving complex and a large number of cofactors. It forms dimeric complexes.

The protein localises to the plastid. The protein resides in the chloroplast thylakoid membrane. In terms of biological role, one of the components of the core complex of photosystem II (PSII). PSII is a light-driven water:plastoquinone oxidoreductase that uses light energy to abstract electrons from H(2)O, generating O(2) and a proton gradient subsequently used for ATP formation. It consists of a core antenna complex that captures photons, and an electron transfer chain that converts photonic excitation into a charge separation. This subunit is found at the monomer-monomer interface. The protein is Photosystem II reaction center protein M of Tetradesmus obliquus (Green alga).